We begin with the raw amino-acid sequence, 201 residues long: 3-isopropylmalate dehydratase small subunit (201 aa).

Belongs to the LeuD family. LeuD type 1 subfamily. In terms of assembly, heterodimer of LeuC and LeuD.

The enzyme catalyses (2R,3S)-3-isopropylmalate = (2S)-2-isopropylmalate. It functions in the pathway amino-acid biosynthesis; L-leucine biosynthesis; L-leucine from 3-methyl-2-oxobutanoate: step 2/4. In terms of biological role, catalyzes the isomerization between 2-isopropylmalate and 3-isopropylmalate, via the formation of 2-isopropylmaleate. This Mesorhizobium japonicum (strain LMG 29417 / CECT 9101 / MAFF 303099) (Mesorhizobium loti (strain MAFF 303099)) protein is 3-isopropylmalate dehydratase small subunit.